The chain runs to 124 residues: Large ribosomal subunit protein uL22 (124 aa).

Belongs to the universal ribosomal protein uL22 family. Part of the 50S ribosomal subunit.

In terms of biological role, this protein binds specifically to 23S rRNA; its binding is stimulated by other ribosomal proteins, e.g. L4, L17, and L20. It is important during the early stages of 50S assembly. It makes multiple contacts with different domains of the 23S rRNA in the assembled 50S subunit and ribosome. The globular domain of the protein is located near the polypeptide exit tunnel on the outside of the subunit, while an extended beta-hairpin is found that lines the wall of the exit tunnel in the center of the 70S ribosome. This chain is Large ribosomal subunit protein uL22, found in Synechococcus sp. (strain JA-2-3B'a(2-13)) (Cyanobacteria bacterium Yellowstone B-Prime).